The primary structure comprises 382 residues: uncharacterized protein (382 aa).

A run of 12 helical transmembrane segments spans residues valine 8–leucine 28, methionine 45–isoleucine 65, tyrosine 75–tryptophan 95, phenylalanine 102–serine 122, leucine 131–serine 151, leucine 157–phenylalanine 177, leucine 204–proline 224, glycine 231–glycine 251, valine 270–proline 290, alanine 291–cysteine 311, alanine 325–methionine 345, and serine 349–leucine 369.

Belongs to the major facilitator superfamily. YcaD (TC 2.A.1.26) family.

The protein localises to the cell inner membrane. This is an uncharacterized protein from Salmonella paratyphi B (strain ATCC BAA-1250 / SPB7).